Here is an 858-residue protein sequence, read N- to C-terminus: Low-density lipoprotein receptor-related protein 12 (858 aa).

A signal peptide spans 1–32 (MARRWSTKESQRRGSAWLLLFLAGVYGNGALA). Residues 33 to 492 (ELSENVHISG…ENCPVIVPTR (460 aa)) are Extracellular-facing. Intrachain disulfides connect Cys47–Cys76, Cys103–Cys122, Cys166–Cys178, Cys173–Cys191, Cys185–Cys200, Cys215–Cys232, Cys222–Cys245, Cys239–Cys254, and Cys259–Cys285. Positions 47–159 (CGESPEQIRA…KGFRLAYFSG (113 aa)) constitute a CUB 1 domain. A glycan (N-linked (GlcNAc...) asparagine) is linked at Asn75. LDL-receptor class A domains are found at residues 165 to 201 (DCAC…EVCA) and 214 to 255 (PCAY…IDCD). Positions 259 to 372 (CGQWLKYFYG…RGFNATYQVD (114 aa)) constitute a CUB 2 domain. Asn284 and Asn366 each carry an N-linked (GlcNAc...) asparagine glycan. LDL-receptor class A domains are found at residues 374–411 (FCLP…INCT), 412–449 (MCQK…KNCF), and 450–486 (FCQP…ENCP). Cystine bridges form between Cys375–Cys388, Cys382–Cys401, Cys395–Cys410, Cys413–Cys426, Cys420–Cys439, Cys433–Cys448, Cys451–Cys463, Cys458–Cys476, and Cys470–Cys485. Residue Asn409 is glycosylated (N-linked (GlcNAc...) asparagine). A glycan (N-linked (GlcNAc...) asparagine) is linked at Asn441. The helical transmembrane segment at 493 to 513 (VITAAVIGSLICGLLLVIALG) threads the bilayer. Residues 514–858 (CTCKLYSLRM…TSDDEALLLC (345 aa)) lie on the Cytoplasmic side of the membrane. Disordered regions lie at residues 619 to 721 (ALVS…VSPA) and 746 to 767 (SSST…SGRE). The span at 712–721 (SVEAPSVSPA) shows a compositional bias: low complexity. A compositionally biased stretch (polar residues) spans 746–755 (SSSTTQNRSP).

It belongs to the LDLR family. May interact with RACK1, ZFYVE9 and NMRK2.

Its subcellular location is the membrane. It localises to the coated pit. In terms of biological role, probable receptor, which may be involved in the internalization of lipophilic molecules and/or signal transduction. May act as a tumor suppressor. The protein is Low-density lipoprotein receptor-related protein 12 (Lrp12) of Mus musculus (Mouse).